We begin with the raw amino-acid sequence, 166 residues long: Ribosome maturation factor RimM (166 aa).

Residues 94–165 (EGEYYLGKLI…TIELKVLDLL (72 aa)) enclose the PRC barrel domain.

This sequence belongs to the RimM family. As to quaternary structure, binds ribosomal protein uS19.

It is found in the cytoplasm. An accessory protein needed during the final step in the assembly of 30S ribosomal subunit, possibly for assembly of the head region. Essential for efficient processing of 16S rRNA. May be needed both before and after RbfA during the maturation of 16S rRNA. It has affinity for free ribosomal 30S subunits but not for 70S ribosomes. The chain is Ribosome maturation factor RimM from Borreliella afzelii (strain PKo) (Borrelia afzelii).